A 184-amino-acid chain; its full sequence is Ras-related protein Rap-1b (184 aa).

A GTP-binding site is contributed by 10 to 18; sequence GSGGVGKSA. The tract at residues 25–67 is interaction with KRIT1; sequence QGIFVEKYDPTIEDSYRKQVEVDAQQCMLEILDTAGTEQFTAM. The Effector region signature appears at 32-40; sequence YDPTIEDSY. Ser39 bears the ADP-ribosylserine; by botulinum toxin mark. GTP contacts are provided by residues 57–61, 116–119, and 147–149; these read DTAGT, NKCD, and SAK. Ser179 is modified (phosphoserine; by PKA). Cys181 bears the Cysteine methyl ester mark. The S-geranylgeranyl cysteine moiety is linked to residue Cys181. A propeptide spans 182–184 (removed in mature form); that stretch reads QLL.

This sequence belongs to the small GTPase superfamily. Ras family. As to quaternary structure, heterodimer with RAP1GAP. Interacts with EPAC2. Interacts with SGSM1. Interacts with SGSM2. Interacts with SGSM3. Interacts with KRIT1. Interacts with RAP1GDS1.

The protein localises to the cell membrane. The protein resides in the cytoplasm. It localises to the cytosol. It is found in the cell junction. It catalyses the reaction GTP + H2O = GDP + phosphate + H(+). With respect to regulation, activated by guanine nucleotide-exchange factor (GEF) EPAC2 in a cAMP-dependent manner. Its function is as follows. GTP-binding protein that possesses intrinsic GTPase activity. Contributes to the polarizing activity of KRIT1 and CDH5 in the establishment and maintenance of correct endothelial cell polarity and vascular lumen. Required for the localization of phosphorylated PRKCZ, PARD3 and TIAM1 to the cell junction. Plays a role in the establishment of basal endothelial barrier function. The chain is Ras-related protein Rap-1b (Rap1b) from Rattus norvegicus (Rat).